The sequence spans 144 residues: Large ribosomal subunit protein uL15 (144 aa).

The tract at residues 1 to 53 is disordered; sequence MRLNTLSPAEGAKHAPKRLGRGIGSGLGKTGGRGHKGQNSRSGGGVRRGFEGG. The span at 21–31 shows a compositional bias: gly residues; that stretch reads RGIGSGLGKTG.

Belongs to the universal ribosomal protein uL15 family. As to quaternary structure, part of the 50S ribosomal subunit.

In terms of biological role, binds to the 23S rRNA. This is Large ribosomal subunit protein uL15 from Pectobacterium atrosepticum (strain SCRI 1043 / ATCC BAA-672) (Erwinia carotovora subsp. atroseptica).